The following is a 921-amino-acid chain: Isoleucine--tRNA ligase (921 aa).

The 'HIGH' region signature appears at 57–67 (PYANGDIHMGH). L-isoleucyl-5'-AMP is bound at residue glutamate 552. Positions 593–597 (KMSKS) match the 'KMSKS' region motif. Lysine 596 provides a ligand contact to ATP. 4 residues coordinate Zn(2+): cysteine 888, cysteine 891, cysteine 908, and cysteine 911.

This sequence belongs to the class-I aminoacyl-tRNA synthetase family. IleS type 1 subfamily. Monomer. Zn(2+) serves as cofactor.

The protein resides in the cytoplasm. The enzyme catalyses tRNA(Ile) + L-isoleucine + ATP = L-isoleucyl-tRNA(Ile) + AMP + diphosphate. Catalyzes the attachment of isoleucine to tRNA(Ile). As IleRS can inadvertently accommodate and process structurally similar amino acids such as valine, to avoid such errors it has two additional distinct tRNA(Ile)-dependent editing activities. One activity is designated as 'pretransfer' editing and involves the hydrolysis of activated Val-AMP. The other activity is designated 'posttransfer' editing and involves deacylation of mischarged Val-tRNA(Ile). The sequence is that of Isoleucine--tRNA ligase from Bacillus cereus (strain G9842).